Consider the following 463-residue polypeptide: MPSLPLLLRLWAASSYSFPVIQDGLQKNVKTVWKYLENYYNLGKNMQAKNVNGKEVMAEKLRQMQQLFGLKVTGNSDPETLRAMKKPRCGVPDVAPYAITHNNPRWTKTHLTYSILNYTPYLSKAVVEDAIARAFRVWSDVTPLTFQRVFEEEGDIVLSFHRGDHGDLYTFDGSKYHFAHAFLPGLGLGGNVHYDLDQKWTDNNEDFNLFYVTAHELGHSLGLSHSNDEEALMFPSYTWSNKDFVLNQDDINRIQALYGPSPNPIQLTDATLDPCNSGLTFDAIITYRGEVIFFKDRFYIRVISFLPEPLIDVIDLTWPNLPGKFDAAYEVSGVDELRFFKGSKVWAVQEQNVLEGFPMDIQSFFGFPSNVTNIDAAVCEEETGKTYFFVDHMYWRYDENTRSMDPGYPRLIAEDFPGIDYKVDDVIQKEDNFYFFHQSIQYRFNLKTRRIDDSSDINTWFNC.

The signal sequence occupies residues 1 to 17 (MPSLPLLLRLWAASSYS). A propeptide spans 18 to 96 (FPVIQDGLQK…PRCGVPDVAP (79 aa)) (activation peptide). Positions 87–94 (PRCGVPDV) match the Cysteine switch motif. C89 is a binding site for Zn(2+). The metalloprotease stretch occupies residues 95–273 (APYAITHNNP…PIQLTDATLD (179 aa)). D155 is a Ca(2+) binding site. Residues H165 and D167 each coordinate Zn(2+). Ca(2+)-binding residues include D172 and G173. H180 contacts Zn(2+). G187 and G189 together coordinate Ca(2+). H193 serves as a coordination point for Zn(2+). D195 provides a ligand contact to Ca(2+). Residue H215 participates in Zn(2+) binding. Residue E216 is part of the active site. Zn(2+) contacts are provided by H219 and H225. Residues C275 and C463 are joined by a disulfide bond. Hemopexin repeat units follow at residues 278–321 (GLTF…WPNL) and 322–368 (PGKF…FGFP). D282 lines the Ca(2+) pocket. N370 carries N-linked (GlcNAc...) asparagine glycosylation. 2 Hemopexin repeats span residues 371–419 (VTNI…FPGI) and 420–463 (DYKV…WFNC). D375 and D424 together coordinate Ca(2+).

The protein belongs to the peptidase M10A family. Requires Ca(2+) as cofactor. Zn(2+) serves as cofactor.

It localises to the secreted. The protein localises to the extracellular space. Its subcellular location is the extracellular matrix. The enzyme catalyses Cleavage of the triple helix of collagen at about three-quarters of the length of the molecule from the N-terminus, at 775-Gly-|-Ile-776 in the alpha1(I) chain. Cleaves synthetic substrates and alpha-macroglobulins at bonds where P1' is a hydrophobic residue.. Can be activated without removal of the activation peptide. This Mus musculus (Mouse) protein is Interstitial collagenase B (Mmp1b).